The following is a 717-amino-acid chain: Glutamate--cysteine ligase (717 aa).

The tract at residues 484-576 (SKTTEQRAAK…TDSDHTDTDD (93 aa)) is disordered. 2 stretches are compositionally biased toward low complexity: residues 492-518 (AKAQ…NGNG) and 551-567 (GTTN…SNGT).

It belongs to the glutamate--cysteine ligase type 3 family.

It carries out the reaction L-cysteine + L-glutamate + ATP = gamma-L-glutamyl-L-cysteine + ADP + phosphate + H(+). It catalyses the reaction (2S)-2-aminobutanoate + L-glutamate + ATP = gamma-L-glutamyl-(2S)-2-aminobutanoate + ADP + phosphate + H(+). It functions in the pathway sulfur metabolism; glutathione biosynthesis; glutathione from L-cysteine and L-glutamate: step 1/2. In terms of biological role, catalyzes the ATP-dependent ligation of L-glutamate and L-cysteine and participates in the first and rate-limiting step in glutathione biosynthesis. In Drosophila melanogaster (Fruit fly), this protein is Glutamate--cysteine ligase.